Here is a 271-residue protein sequence, read N- to C-terminus: Ribosomal RNA small subunit methyltransferase A (271 aa).

Positions 11, 13, 38, 59, 84, and 109 each coordinate S-adenosyl-L-methionine.

This sequence belongs to the class I-like SAM-binding methyltransferase superfamily. rRNA adenine N(6)-methyltransferase family. RsmA subfamily.

Its subcellular location is the cytoplasm. It catalyses the reaction adenosine(1518)/adenosine(1519) in 16S rRNA + 4 S-adenosyl-L-methionine = N(6)-dimethyladenosine(1518)/N(6)-dimethyladenosine(1519) in 16S rRNA + 4 S-adenosyl-L-homocysteine + 4 H(+). Specifically dimethylates two adjacent adenosines (A1518 and A1519) in the loop of a conserved hairpin near the 3'-end of 16S rRNA in the 30S particle. May play a critical role in biogenesis of 30S subunits. This is Ribosomal RNA small subunit methyltransferase A from Nostoc sp. (strain PCC 7120 / SAG 25.82 / UTEX 2576).